The primary structure comprises 198 residues: Large ribosomal subunit protein uL5 (198 aa).

It belongs to the universal ribosomal protein uL5 family. As to quaternary structure, part of the 50S ribosomal subunit; part of the 5S rRNA/L5/L18/L25 subcomplex. Contacts the 5S rRNA and the P site tRNA. Forms a bridge to the 30S subunit in the 70S ribosome.

This is one of the proteins that bind and probably mediate the attachment of the 5S RNA into the large ribosomal subunit, where it forms part of the central protuberance. In the 70S ribosome it contacts protein S13 of the 30S subunit (bridge B1b), connecting the 2 subunits; this bridge is implicated in subunit movement. Contacts the P site tRNA; the 5S rRNA and some of its associated proteins might help stabilize positioning of ribosome-bound tRNAs. This is Large ribosomal subunit protein uL5 from Chlorobium phaeovibrioides (strain DSM 265 / 1930) (Prosthecochloris vibrioformis (strain DSM 265)).